The primary structure comprises 419 residues: Peptide chain release factor subunit 1 (419 aa).

Belongs to the eukaryotic release factor 1 family. In terms of assembly, heterodimer of two subunits, one of which binds GTP.

The protein localises to the cytoplasm. In terms of biological role, directs the termination of nascent peptide synthesis (translation) in response to the termination codons UAA, UAG and UGA. This Methanococcus maripaludis (strain C6 / ATCC BAA-1332) protein is Peptide chain release factor subunit 1.